Consider the following 75-residue polypeptide: Sperm-specific protein PL-I (75 aa).

In terms of domain architecture, H15 spans 2–74 (GSSGMMSMVA…GSAGWVLVPK (73 aa)).

It belongs to the histone H1/H5 family. As to expression, sperm.

It localises to the nucleus. The protein resides in the chromosome. Its function is as follows. Linker histones are implicated in chromatin remodeling and/or transcriptional regulation during spermiogenesis, the process of spermatid maturation into spermatozoa. This chain is Sperm-specific protein PL-I, found in Spisula solidissima (Atlantic surf-clam).